A 470-amino-acid polypeptide reads, in one-letter code: 3-isopropylmalate dehydratase large subunit (470 aa).

Positions 294–307 (PDQNTGISGSTPNP) are enriched in polar residues. Residues 294–313 (PDQNTGISGSTPNPSDAADD) are disordered. [4Fe-4S] cluster is bound by residues Cys347, Cys407, and Cys410.

It belongs to the aconitase/IPM isomerase family. LeuC type 1 subfamily. In terms of assembly, heterodimer of LeuC and LeuD. It depends on [4Fe-4S] cluster as a cofactor.

The enzyme catalyses (2R,3S)-3-isopropylmalate = (2S)-2-isopropylmalate. It participates in amino-acid biosynthesis; L-leucine biosynthesis; L-leucine from 3-methyl-2-oxobutanoate: step 2/4. In terms of biological role, catalyzes the isomerization between 2-isopropylmalate and 3-isopropylmalate, via the formation of 2-isopropylmaleate. The sequence is that of 3-isopropylmalate dehydratase large subunit from Akkermansia muciniphila (strain ATCC BAA-835 / DSM 22959 / JCM 33894 / BCRC 81048 / CCUG 64013 / CIP 107961 / Muc).